The primary structure comprises 495 residues: UDP-N-acetylmuramoyl-L-alanyl-D-glutamate--2,6-diaminopimelate ligase (495 aa).

Residues Leu27, Ser29, and 44 to 46 contribute to the UDP-N-acetyl-alpha-D-muramoyl-L-alanyl-D-glutamate site; that span reads HQA. 116–122 lines the ATP pocket; the sequence is GTNGKTT. UDP-N-acetyl-alpha-D-muramoyl-L-alanyl-D-glutamate contacts are provided by residues Asn157, 158–159, Ser185, Gln191, and Arg193; that span reads TT. The residue at position 225 (Lys225) is an N6-carboxylysine. Residues Arg390, 414 to 417, Gly465, and Glu469 each bind meso-2,6-diaminopimelate; that span reads DNPR. A Meso-diaminopimelate recognition motif motif is present at residues 414–417; sequence DNPR.

Belongs to the MurCDEF family. MurE subfamily. The cofactor is Mg(2+). Post-translationally, carboxylation is probably crucial for Mg(2+) binding and, consequently, for the gamma-phosphate positioning of ATP.

The protein resides in the cytoplasm. It carries out the reaction UDP-N-acetyl-alpha-D-muramoyl-L-alanyl-D-glutamate + meso-2,6-diaminopimelate + ATP = UDP-N-acetyl-alpha-D-muramoyl-L-alanyl-gamma-D-glutamyl-meso-2,6-diaminopimelate + ADP + phosphate + H(+). The protein operates within cell wall biogenesis; peptidoglycan biosynthesis. Functionally, catalyzes the addition of meso-diaminopimelic acid to the nucleotide precursor UDP-N-acetylmuramoyl-L-alanyl-D-glutamate (UMAG) in the biosynthesis of bacterial cell-wall peptidoglycan. This Salmonella paratyphi A (strain ATCC 9150 / SARB42) protein is UDP-N-acetylmuramoyl-L-alanyl-D-glutamate--2,6-diaminopimelate ligase.